A 115-amino-acid polypeptide reads, in one-letter code: NADH-ubiquinone oxidoreductase chain 3 (115 aa).

Transmembrane regions (helical) follow at residues 4–24 (FIVM…AFWL), 55–75 (FFLV…LLPL), and 86–106 (ITML…AYEW).

Belongs to the complex I subunit 3 family. Core subunit of respiratory chain NADH dehydrogenase (Complex I) which is composed of 45 different subunits. Interacts with TMEM186. Interacts with TMEM242.

The protein resides in the mitochondrion inner membrane. It carries out the reaction a ubiquinone + NADH + 5 H(+)(in) = a ubiquinol + NAD(+) + 4 H(+)(out). In terms of biological role, core subunit of the mitochondrial membrane respiratory chain NADH dehydrogenase (Complex I) which catalyzes electron transfer from NADH through the respiratory chain, using ubiquinone as an electron acceptor. Essential for the catalytic activity of complex I. The chain is NADH-ubiquinone oxidoreductase chain 3 from Reithrodontomys fulvescens (Fulvous harvest mouse).